The primary structure comprises 957 residues: Calsyntenin-3 (957 aa).

A signal peptide spans Met-1–Cys-19. Over Asn-20–Ala-848 the chain is Extracellular. Cadherin domains are found at residues Ile-29–Phe-145 and Val-146–Trp-246. N-linked (GlcNAc...) asparagine glycans are attached at residues Asn-299, Asn-347, and Asn-508. Residues Ala-849–Val-869 traverse the membrane as a helical segment. The Cytoplasmic portion of the chain corresponds to Arg-870–Tyr-957. The segment at Cys-919 to Tyr-957 is disordered. A compositionally biased stretch (acidic residues) spans Gln-928–Ala-938. The segment covering Ser-944–Tyr-957 has biased composition (basic and acidic residues).

This sequence belongs to the calsyntenin family. Interacts (via cadherin domains) with both alpha and beta isoforms of neurexins (NRXN1, NRXN2 and NRXN3). Directly interacts with APBA2. Forms a tripartite complex with APBA2 and APP. Interacts with low affinity with KLC1. Interacts with SLC23A2/SVCT2. In terms of processing, proteolytically processed under normal cellular conditions. A primary zeta-cleavage generates a large extracellular (soluble) N-terminal domain (sAlc) and a short C-terminal transmembrane fragment (CTF1). A secondary cleavage catalyzed by gamma-secretase within the transmembrane domain releases the beta-Alc-beta chain in the extracellular milieu and produces an intracellular fragment (AlcICD). This processing is strongly suppressed in the tripartite complex formed with APBA2 and APP, which seems to prevent the association with gamma-secretase.

The protein resides in the postsynaptic cell membrane. It is found in the endoplasmic reticulum membrane. The protein localises to the golgi apparatus membrane. It localises to the cell projection. Its subcellular location is the dendrite. In terms of biological role, postsynaptic adhesion molecule that binds to presynaptic neurexins to mediate both excitatory and inhibitory synapse formation. Promotes synapse development by acting as a cell adhesion molecule at the postsynaptic membrane, which associates with both neurexin-alpha and neurexin-beta proteins at the presynaptic membrane. Regulates the balance between excitatory and inhibitory synapses by inhibiting formation of excitatory parallel-fiber synapses and promoting formation of inhibitory synapses in the same neuron. May also be involved in ascorbate (vitamin C) uptake via its interaction with SLC23A2/SVCT2. Complex formation with APBA2 and APP, stabilizes APP metabolism and enhances APBA2-mediated suppression of beta-APP40 secretion, due to the retardation of intracellular APP maturation. The protein is Calsyntenin-3 (CLSTN3) of Bos taurus (Bovine).